Consider the following 134-residue polypeptide: Protein YhfA (134 aa).

The chain is Protein YhfA (yhfA) from Escherichia coli O157:H7.